Consider the following 479-residue polypeptide: Aspartyl/glutamyl-tRNA(Asn/Gln) amidotransferase subunit B (479 aa).

Belongs to the GatB/GatE family. GatB subfamily. As to quaternary structure, heterotrimer of A, B and C subunits.

It catalyses the reaction L-glutamyl-tRNA(Gln) + L-glutamine + ATP + H2O = L-glutaminyl-tRNA(Gln) + L-glutamate + ADP + phosphate + H(+). The enzyme catalyses L-aspartyl-tRNA(Asn) + L-glutamine + ATP + H2O = L-asparaginyl-tRNA(Asn) + L-glutamate + ADP + phosphate + 2 H(+). In terms of biological role, allows the formation of correctly charged Asn-tRNA(Asn) or Gln-tRNA(Gln) through the transamidation of misacylated Asp-tRNA(Asn) or Glu-tRNA(Gln) in organisms which lack either or both of asparaginyl-tRNA or glutaminyl-tRNA synthetases. The reaction takes place in the presence of glutamine and ATP through an activated phospho-Asp-tRNA(Asn) or phospho-Glu-tRNA(Gln). The chain is Aspartyl/glutamyl-tRNA(Asn/Gln) amidotransferase subunit B from Streptococcus pyogenes serotype M12 (strain MGAS2096).